Consider the following 816-residue polypeptide: Two pore channel protein 1 (816 aa).

Residues 1–112 (MAVSLDDDVP…AHNHLFYLME (112 aa)) lie on the Cytoplasmic side of the membrane. The segment at 17–64 (EGGSAPLAPSNGLGQEELPSKNGGSYAIHDSQAPSLSSGGESSPSSPA) is disordered. Residues 50–63 (PSLSSGGESSPSSP) are compositionally biased toward low complexity. Residues 113–133 (LATALLLLLLSLCEAPAVPAL) form a helical membrane-spanning segment. Position 134 (Arg-134) is a topological domain, extracellular. A helical membrane pass occupies residues 135–155 (LGIYVHATLELFALMVVVFEL). Residues 156 to 177 (CMKLRWLGLHTFIRHKRTMVKT) lie on the Cytoplasmic side of the membrane. The helical transmembrane segment at 178 to 198 (SVLVVQFVEAIVVLVRQMSHV) threads the bilayer. The Extracellular segment spans residues 199–200 (RV). Residues 201-220 (TRALRCIFLVDCRYCGGVRR) traverse the membrane as a helical segment. The Cytoplasmic portion of the chain corresponds to 221-234 (NLRQIFQSLPPFMD). Residues 235 to 255 (ILLLLLFFMIIFAILGFYLFS) traverse the membrane as a helical segment. Residues 256 to 262 (PNPSDPY) are Extracellular-facing. The segment at residues 263–286 (FSTLENSIVSLFVLLTTANFPDVM) is an intramembrane region (helical; Pore-forming). At 287–294 (MPSYSRNP) the chain is on the extracellular side. Residues 295-315 (WSCVFFIVYLSIELYFIMNLL) form a helical membrane-spanning segment. Over 316 to 444 (LAVVFDTFND…NILVKSKAFQ (129 aa)) the chain is Cytoplasmic. A helical transmembrane segment spans residues 445–465 (YFMYLVVAVNGVWILVETFML). Residues 466–479 (KGGNFFSKHVPWSY) are Extracellular-facing. Residues 480–500 (LVFLTIYGVELFLKVAGLGPV) traverse the membrane as a helical segment. Over 501–503 (EYL) the chain is Cytoplasmic. Residues 504–526 (SSGWNLFDFSVTVFAFLGLLALA) traverse the membrane as a helical segment. Over 527–534 (LNMEPFYF) the chain is Extracellular. Residues 535–549 (IVVLRPLQLLRLFKL) traverse the membrane as a helical segment. The Cytoplasmic segment spans residues 550–573 (KERYRNVLDTMFELLPRMASLGLT). Residues 574 to 594 (LLIFYYSFAIVGMEFFCGIVF) traverse the membrane as a helical segment. At 595-629 (PNCCNTSTVADAYRWRNHTVGNRTVVEEGYYYLNN) the chain is on the extracellular side. N-linked (GlcNAc...) asparagine glycosylation is found at Asn-599, Asn-611, and Asn-616. The helical; Pore-forming intramembrane region spans 630 to 653 (FDNILNSFVTLFELTVVNNWYIIM). Over 654–670 (EGVTSQTSHWSRLYFMT) the chain is Extracellular. A helical membrane pass occupies residues 671–691 (FYIVTMVVMTIIVAFILEAFV). The Cytoplasmic portion of the chain corresponds to 692 to 816 (FRMNYSRKNQ…GSRQRSQTVT (125 aa)). Residues 769–796 (SLKMYQEEIQEWYEEHAREQEQQRQLSS) are a coiled coil. Residues 782–816 (EEHAREQEQQRQLSSSAAPAAQQPPGSRQRSQTVT) form a disordered region. The span at 791–816 (QRQLSSSAAPAAQQPPGSRQRSQTVT) shows a compositional bias: low complexity.

This sequence belongs to the calcium channel alpha-1 subunit (TC 1.A.1.11) family. Two pore calcium channel subfamily. Dimer. Interacts with MTOR; the interaction is required for TPCN1 ATP sensitivity. Interacts with STX7, STX8 and STX12. Interacts with JPT2. Found in a complex with LSM12, TPCN1 and TPCN2. N-glycosylated. Highest expression found in the heart and kidney, and lowest expression found in the spleen.

The protein localises to the lysosome membrane. Its subcellular location is the endosome membrane. The protein resides in the early endosome membrane. It localises to the recycling endosome membrane. It catalyses the reaction Na(+)(in) = Na(+)(out). It carries out the reaction Ca(2+)(in) = Ca(2+)(out). With respect to regulation, na(+) current is inhibited by ATP in a MTORC-dependent manner. ATP sensitivity is independent of PI(3,5)P2. Probably regulated by Mg(2+) ions, cytosolic Mg(2+) selectively inhibits outward current while lysosomal Mg(2+) modestly inhibits both the outward and inward currents. In the absence of Mg(2+), NAADP readily activates TPCN2, with properties similar to PI(3,5)P2. Both current elicited by PI(3,5)P2 as well as NAADP are inhibited by tetrandrine. Functionally, intracellular channel initially characterized as a non-selective Ca(2+)-permeable channel activated by NAADP (nicotinic acid adenine dinucleotide phosphate), it is also a voltage-gated highly-selective Na(+) channel activated directly by PI(3,5)P2 (phosphatidylinositol 3,5-bisphosphate) that senses pH changes and confers electrical excitability to organelles. Localizes to the early and recycling endosomes membranes where it plays a role in the uptake and processing of proteins and regulates organellar membrane excitability, membrane trafficking and pH homeostasis. Ion selectivity is not fixed but rather agonist-dependent and under defined ionic conditions, can be readily activated by both NAADP and PI(3,5)P2. Required for mTOR-dependent nutrient sensing. In terms of biological role, (Microbial infection) During Ebola virus (EBOV) infection, controls the movement of endosomes containing virus particles and is required by EBOV to escape from the endosomal network into the cell cytoplasm. The polypeptide is Two pore channel protein 1 (Homo sapiens (Human)).